The primary structure comprises 494 residues: MFQVQKELASHEAVVVALFEEEKTSSFVQELDKAFEGQLQVLLEEKELSTKKKAISKVHSLGKTDVKRYYFVGLGKKESYTTETLRSALGKTFKTLQAAKVQDAAILLDSFVTEKLDAIDVAHIAAEVQGLGTYELQTYKSDKKDRVELEKFTAITAEDAQEIEAALTVGYVHGRATNSARTLVNMPPNVLTATKLAEYAVELAEKYDMDYKVLEKEEMEELGMGALLAVNQGSVEPPKMIALIYKGKEEWTDVIGFVGKGITYDTGGYSLKPREGMVGMKGDMGGAAAVLGAMEIIGELRPEQNVIAVIPSTDNVVSGTAFKPDDVITSMSGKTIEVLNTDAEGRLALADGITYAKKLGANYLIDVATLTGGVIVALGNHTTGAMTNNEELFEQVLEASMETDESIWQLPIFDRDKERVRNSKFADLNNSPGREGHAVMAGTFLGEFAEDTPWVHLDIAGTSESSGAHDLGPAGATGAMVRTLATLVERFGEE.

The Mn(2+) site is built by K260 and D265. The active site involves K272. D283, D342, and E344 together coordinate Mn(2+). The active site involves R346.

The protein belongs to the peptidase M17 family. The cofactor is Mn(2+).

The protein resides in the cytoplasm. The catalysed reaction is Release of an N-terminal amino acid, Xaa-|-Yaa-, in which Xaa is preferably Leu, but may be other amino acids including Pro although not Arg or Lys, and Yaa may be Pro. Amino acid amides and methyl esters are also readily hydrolyzed, but rates on arylamides are exceedingly low.. It carries out the reaction Release of an N-terminal amino acid, preferentially leucine, but not glutamic or aspartic acids.. Its function is as follows. Presumably involved in the processing and regular turnover of intracellular proteins. Catalyzes the removal of unsubstituted N-terminal amino acids from various peptides. This is Probable cytosol aminopeptidase from Bacillus cereus (strain ZK / E33L).